The primary structure comprises 1263 residues: MSKTSKSNKNPKSIEEKYQKKNLHEHILHSPDTYIGSIEEKTCNMWIFNESAGEDDAKIIFKEITYVPGLYKIYDEVIVNAADHNKRCQTCNIIKVDIDQKTGQISVWNNGDGIDVAIHKEHNIWVPSMIFGELLTSTNYDKNEEKTVGGKNGFGAKLANIYSVEFTIETVDANKGKKFFQRFTNNMYDKEEPKISSFKKSSYTKITFIPDFKKFGLKCLDDDTLALFKKRVFDLAMTTNAKVYFNDKQIVQNNFKKYVGLYFPEGSQHKVVIDDTTHERWKVGVIYDPTDQLEHQNISFVNSICTSRGGTHVEQVVGQIVNGLKTAIVKKAKNVQIKPAMIKENLIFFVDATIVNPDFDTQTKEYLTKKAANFGSKFEVTEKFIKGVIKTGVCDQIIANAKAREEANLSKTDGKGRGPVRYEKLYNAHKAGTKEGYKCTLILTEGDSAKTFAMSGLNVIGRDYYGVFPLRGKLLNVRDASPKKIADNEEITAIKKIVGLEQGKVYDDLKGLRYGSIMILADQDVDGYHIKGLIMNFIHCFWPSLVKYEGFIQSFATPLLKATKGKGKTKQVVAFTSPQSFEEWKKENNDGKGWSIKYYKGLGTSDPAEAQECFADLNDKLVKYFWEPKKKNLESESNSKSVDSNKSKTTNKKKIESEFIEEESDIISDTYKPKNKDISEDAMTLAFAGGREDDRKIWINTYNPDNYLDPSKKRISYYDFIHKELITFSVDDVLRSVPNLMDGFKPSHRKVFYGSVEKNIYKQEIKVSDLTGFVSNMTKYHHGDQSLSSTIVGMAQNYVGSNNLNLLMPLGMFGSRLTGGKDSASPRYLNTKLDDLAKKIFIDYDFDILQHQSEDNCRIEPVYYAPIIPMILVNGAEGIGTGYSTKIYPCNPRDIIANIKRLLTNENPKTMKPWFRHLTGTIEKIDGAKYISRAKYEIIGKDTIHITDLPVGIWTDNYKAFLDNLIVQGTAQNAEEKKASKAVSSAKNTKTTTKAGSKTGSRTRKNPALAKKSQKSVTAKVAKKNPVASSIKTYSEDCTDIRISFTIVFHPGKLDTLIKSGKLDTGLKLVKPLNLTNMHLFNEKGKIKKYDTYGAILRNFVKVRLNLYQKRKDYLLGKWKKEMDILKWKVKFIEYVIEGKIVIFKNGKSKKKEEVLKALEDLKFPKFIVGNESYPSYGYITSIGLFNLTLEEVEKLKKQLADKKQELAILEAKSPEEIWEEELDEFVEAYDIWEKEVDENYNDLLNKKKGSTGKKSRKTSTQK.

Residues Asn80, Asn109, 137-139 (STN), and 150-157 (GKNGFGAK) contribute to the ATP site. The interaction with DNA stretch occupies residues 329-331 (VKK). 362 to 364 (QTK) contacts ATP. One can recognise a Toprim domain in the interval 439 to 553 (CTLILTEGDS…SLVKYEGFIQ (115 aa)). Mg(2+) contacts are provided by Glu445, Asp522, and Asp524. One can recognise a Topo IIA-type catalytic domain in the interval 737–1223 (VPNLMDGFKP…SPEEIWEEEL (487 aa)). The O-(5'-phospho-DNA)-tyrosine intermediate role is filled by Tyr828. The segment at 977 to 1015 (KKASKAVSSAKNTKTTTKAGSKTGSRTRKNPALAKKSQK) is disordered. Low complexity predominate over residues 981–1000 (KAVSSAKNTKTTTKAGSKTG). The interaction with DNA stretch occupies residues 1068–1077 (KLVKPLNLTN). A disordered region spans residues 1244 to 1263 (LLNKKKGSTGKKSRKTSTQK). Over residues 1247 to 1263 (KKKGSTGKKSRKTSTQK) the composition is skewed to basic residues.

The protein belongs to the type II topoisomerase family. Mg(2+) is required as a cofactor. It depends on Mn(2+) as a cofactor. The cofactor is Ca(2+).

The catalysed reaction is ATP-dependent breakage, passage and rejoining of double-stranded DNA.. Its function is as follows. Can introduce negative superhelical turns into double-stranded circular DNA. The polypeptide is DNA topoisomerase 2 (TOP2) (Acanthamoeba polyphaga (Amoeba)).